The following is a 128-amino-acid chain: SH2 domain-containing protein 1A (128 aa).

Residues 6–102 enclose the SH2 domain; the sequence is VYHGKISRET…GIVIPLQYPV (97 aa). The tract at residues 67–92 is interaction with FYN SH3 domain; the sequence is DTAPGVHKRFFRKIKNLISAFQKPDQ. Lys-89 carries the post-translational modification N6-acetyllysine. The interval 103–128 is disordered; it reads EKKSSARSTQGATGRREDPDVFLKTP. Over residues 116–128 the composition is skewed to basic and acidic residues; that stretch reads GRREDPDVFLKTP.

As to quaternary structure, interacts with CD84, CD244, LY9, SLAMF1 and FYN. Interacts with NTRK1, NTRK2 and NTRK3.

Its subcellular location is the cytoplasm. Cytoplasmic adapter regulating receptors of the signaling lymphocytic activation molecule (SLAM) family such as SLAMF1, CD244, LY9, CD84, SLAMF6 and SLAMF7. In SLAM signaling seems to cooperate with SH2D1B/EAT-2. Initially it has been proposed that association with SLAMF1 prevents SLAMF1 binding to inhibitory effectors including INPP5D/SHIP1 and PTPN11/SHP-2. However, by simultaneous interactions, recruits FYN which subsequently phosphorylates and activates SLAMF1. Positively regulates CD244/2B4- and CD84-mediated natural killer (NK) cell functions. Can also promote CD48-, SLAMF6 -, LY9-, and SLAMF7-mediated NK cell activation. In the context of NK cell-mediated cytotoxicity enhances conjugate formation with target cells. May also regulate the activity of the neurotrophin receptors NTRK1, NTRK2 and NTRK3. The chain is SH2 domain-containing protein 1A (SH2D1A) from Sus scrofa (Pig).